A 523-amino-acid polypeptide reads, in one-letter code: Cytidine and dCMP deaminase domain-containing protein 1 (523 aa).

A compositionally biased stretch (polar residues) spans 1-11 (MKETDQMQSLE). 2 disordered regions span residues 1 to 27 (MKET…GSMT) and 55 to 81 (QGQK…RVST). The CMP/dCMP-type deaminase 1 domain maps to 71–169 (GDNEELTRVS…SLLTEASSSE (99 aa)). Zn(2+) is bound by residues histidine 110, cysteine 135, and cysteine 138. The short motif at 272-284 (NLRQNMKDLILLL) is the Nuclear export signal element. The 166-residue stretch at 318–483 (EVARHCMVQA…LNPSEAYSLD (166 aa)) folds into the CMP/dCMP-type deaminase 2 domain. Position 399 (histidine 399) interacts with Zn(2+). Residue glutamate 401 is the Proton donor of the active site. 2 residues coordinate Zn(2+): cysteine 427 and cysteine 430. Residues 478-523 (EAYSLDPNEPERRENGVLRRRSAKDEQRSSKRPRLETRSAGRATLQ) are disordered. The segment covering 486–516 (EPERRENGVLRRRSAKDEQRSSKRPRLETRS) has biased composition (basic and acidic residues). The short motif at 489 to 511 (RRENGVLRRRSAKDEQRSSKRPR) is the Bipartite nuclear localization signal element.

This sequence belongs to the cytidine and deoxycytidylate deaminase family. Requires Zn(2+) as cofactor.

The protein resides in the cytoplasm. The protein localises to the nucleus. It catalyses the reaction 2'-deoxycytidine + H2O + H(+) = 2'-deoxyuridine + NH4(+). The catalysed reaction is cytidine + H2O + H(+) = uridine + NH4(+). Catalyzes the deamination of cytidine and deoxycytidine into uridine and deoxyuridine, respectively. May play an important role in testicular development and spermatogenesis. In Mus musculus (Mouse), this protein is Cytidine and dCMP deaminase domain-containing protein 1 (Cdadc1).